The following is a 242-amino-acid chain: Ribosomal RNA small subunit methyltransferase G (242 aa).

Residues glycine 78, leucine 83, 130-131 (AE), and arginine 151 each bind S-adenosyl-L-methionine.

It belongs to the methyltransferase superfamily. RNA methyltransferase RsmG family.

Its subcellular location is the cytoplasm. Functionally, specifically methylates the N7 position of guanine in position 518 of 16S rRNA. In Salinispora tropica (strain ATCC BAA-916 / DSM 44818 / JCM 13857 / NBRC 105044 / CNB-440), this protein is Ribosomal RNA small subunit methyltransferase G.